Reading from the N-terminus, the 72-residue chain is Prokaryotic ubiquitin-like protein Pup (72 aa).

A compositionally biased stretch (gly residues) spans Met-1–Gln-10. Residues Met-1–Ser-41 form a disordered region. A coiled-coil region spans residues Asp-27 to Glu-61. The tract at residues Thr-28–Tyr-66 is ARC ATPase binding. The span at Asp-32–Ser-41 shows a compositional bias: basic and acidic residues. Gln-72 bears the Deamidated glutamine mark. Gln-72 participates in a covalent cross-link: Isoglutamyl lysine isopeptide (Gln-Lys) (interchain with K-? in acceptor proteins).

The protein belongs to the prokaryotic ubiquitin-like protein family. Strongly interacts with the proteasome-associated ATPase ARC through a hydrophobic interface; the interacting region of Pup lies in its C-terminal half. There is one Pup binding site per ARC hexamer ring. In terms of processing, is modified by deamidation of its C-terminal glutamine to glutamate by the deamidase Dop, a prerequisite to the subsequent pupylation process.

Its pathway is protein degradation; proteasomal Pup-dependent pathway. Protein modifier that is covalently attached to lysine residues of substrate proteins, thereby targeting them for proteasomal degradation. The tagging system is termed pupylation. This Frankia casuarinae (strain DSM 45818 / CECT 9043 / HFP020203 / CcI3) protein is Prokaryotic ubiquitin-like protein Pup.